The primary structure comprises 97 residues: Small ribosomal subunit protein bS6 (97 aa).

This sequence belongs to the bacterial ribosomal protein bS6 family.

Its function is as follows. Binds together with bS18 to 16S ribosomal RNA. In Limosilactobacillus fermentum (strain NBRC 3956 / LMG 18251) (Lactobacillus fermentum), this protein is Small ribosomal subunit protein bS6.